Reading from the N-terminus, the 357-residue chain is Alanine racemase, catabolic (357 aa).

Catalysis depends on lysine 33, which acts as the Proton acceptor; specific for D-alanine. Lysine 33 carries the post-translational modification N6-(pyridoxal phosphate)lysine. Arginine 129 is a binding site for substrate. Catalysis depends on tyrosine 253, which acts as the Proton acceptor; specific for L-alanine. Methionine 301 is a substrate binding site.

Belongs to the alanine racemase family. Requires pyridoxal 5'-phosphate as cofactor.

The enzyme catalyses L-alanine = D-alanine. The protein operates within amino-acid biosynthesis; D-alanine biosynthesis; D-alanine from L-alanine: step 1/1. Its function is as follows. Isomerizes L-alanine to D-alanine which is then likely oxidized to pyruvate by DadA. Shows racemase activity with both alanine stereoisomers, negligible activity with D-cysteine and L-serine, and exhibits no activity with the remaining natural chiral amino acids. This Pseudomonas putida (strain ATCC 47054 / DSM 6125 / CFBP 8728 / NCIMB 11950 / KT2440) protein is Alanine racemase, catabolic.